The primary structure comprises 421 residues: Thymidine phosphorylase (421 aa).

This sequence belongs to the thymidine/pyrimidine-nucleoside phosphorylase family. Homodimer.

The enzyme catalyses thymidine + phosphate = 2-deoxy-alpha-D-ribose 1-phosphate + thymine. The enzymes which catalyze the reversible phosphorolysis of pyrimidine nucleosides are involved in the degradation of these compounds and in their utilization as carbon and energy sources, or in the rescue of pyrimidine bases for nucleotide synthesis. This is Thymidine phosphorylase (deoA) from Mycoplasma genitalium (strain ATCC 33530 / DSM 19775 / NCTC 10195 / G37) (Mycoplasmoides genitalium).